Here is a 135-residue protein sequence, read N- to C-terminus: Protein NrdI (135 aa).

It belongs to the NrdI family.

In terms of biological role, probably involved in ribonucleotide reductase function. The sequence is that of Protein NrdI from Pectobacterium atrosepticum (strain SCRI 1043 / ATCC BAA-672) (Erwinia carotovora subsp. atroseptica).